Reading from the N-terminus, the 119-residue chain is DNA-binding protein TubR (119 aa).

In terms of assembly, homodimer. Binds to TubZ filaments via the C-terminus of TubZ. DNA is not required for binding to TubZ.

A DNA-binding protein that is part of the type III plasmid partition system used to ensure correct segregation of the pBc10987 plasmid. Binds TubZ filaments but does not influence the GTPase activity of TubZ with or without DNA. Cooperatively binds to multiple regions in tubC (centromere-like site) upstream of its own gene with consensus sequence N(T/A)ATTNC(C/G)GNAAT(A/T)N; probably forms an extended DNA-protein filament. Binds sites in its own promoter region and presumably represses its expression; its effect on RNA expression has not been shown. Does not specifically bind to the putative origin of replication on pBc10987. This Bacillus cereus (strain ATCC 10987 / NRS 248) protein is DNA-binding protein TubR.